Consider the following 126-residue polypeptide: Small ribosomal subunit protein uS11 (126 aa).

The protein belongs to the universal ribosomal protein uS11 family. As to quaternary structure, part of the 30S ribosomal subunit.

Located on the platform of the 30S subunit. The chain is Small ribosomal subunit protein uS11 from Methanosarcina acetivorans (strain ATCC 35395 / DSM 2834 / JCM 12185 / C2A).